A 76-amino-acid polypeptide reads, in one-letter code: Tautomerase PptA (76 aa).

Pro-2 serves as the catalytic Proton acceptor; via imino nitrogen.

It belongs to the 4-oxalocrotonate tautomerase family. PptA subfamily. In terms of assembly, homodimer.

The protein localises to the cytoplasm. The sequence is that of Tautomerase PptA from Enterobacter sp. (strain 638).